The sequence spans 190 residues: dITP/XTP pyrophosphatase (190 aa).

7 to 12 (SNNKNK) serves as a coordination point for substrate. Asp68 (proton acceptor) is an active-site residue. Residue Asp68 participates in Mg(2+) binding. Substrate contacts are provided by residues Thr69, 148 to 151 (FGYD), Lys171, and 176 to 177 (HR).

Belongs to the HAM1 NTPase family. In terms of assembly, homodimer. Mg(2+) serves as cofactor.

It carries out the reaction XTP + H2O = XMP + diphosphate + H(+). The enzyme catalyses dITP + H2O = dIMP + diphosphate + H(+). It catalyses the reaction ITP + H2O = IMP + diphosphate + H(+). Functionally, pyrophosphatase that catalyzes the hydrolysis of nucleoside triphosphates to their monophosphate derivatives, with a high preference for the non-canonical purine nucleotides XTP (xanthosine triphosphate), dITP (deoxyinosine triphosphate) and ITP. Seems to function as a house-cleaning enzyme that removes non-canonical purine nucleotides from the nucleotide pool, thus preventing their incorporation into DNA/RNA and avoiding chromosomal lesions. The protein is dITP/XTP pyrophosphatase of Flavobacterium psychrophilum (strain ATCC 49511 / DSM 21280 / CIP 103535 / JIP02/86).